The primary structure comprises 301 residues: Tyrosine recombinase XerC (301 aa).

Residues 1–85 (MELISLFKQY…ALRSFYRFLV (85 aa)) enclose the Core-binding (CB) domain. The Tyr recombinase domain maps to 106 to 292 (KLPHFFYEKE…TKEKLQESYR (187 aa)). Residues R147, K171, H244, R247, and H270 contribute to the active site. Y279 serves as the catalytic O-(3'-phospho-DNA)-tyrosine intermediate.

It belongs to the 'phage' integrase family. XerC subfamily. In terms of assembly, forms a cyclic heterotetrameric complex composed of two molecules of XerC and two molecules of XerD.

It is found in the cytoplasm. In terms of biological role, site-specific tyrosine recombinase, which acts by catalyzing the cutting and rejoining of the recombining DNA molecules. The XerC-XerD complex is essential to convert dimers of the bacterial chromosome into monomers to permit their segregation at cell division. It also contributes to the segregational stability of plasmids. In Pediococcus pentosaceus (strain ATCC 25745 / CCUG 21536 / LMG 10740 / 183-1w), this protein is Tyrosine recombinase XerC.